The following is a 63-amino-acid chain: MSQATSMRKRHRFNSRMTRIVLLISFIFFFGRFIYSSVGAWQHHQSKKEAQQSTLSVESPVQR.

The chain crosses the membrane as a helical span at residues 20 to 40; sequence IVLLISFIFFFGRFIYSSVGA.

It is found in the membrane. This is an uncharacterized protein from Escherichia coli O157:H7.